A 417-amino-acid polypeptide reads, in one-letter code: Gamma-glutamyl phosphate reductase (417 aa).

This sequence belongs to the gamma-glutamyl phosphate reductase family.

It is found in the cytoplasm. It carries out the reaction L-glutamate 5-semialdehyde + phosphate + NADP(+) = L-glutamyl 5-phosphate + NADPH + H(+). Its pathway is amino-acid biosynthesis; L-proline biosynthesis; L-glutamate 5-semialdehyde from L-glutamate: step 2/2. In terms of biological role, catalyzes the NADPH-dependent reduction of L-glutamate 5-phosphate into L-glutamate 5-semialdehyde and phosphate. The product spontaneously undergoes cyclization to form 1-pyrroline-5-carboxylate. The sequence is that of Gamma-glutamyl phosphate reductase from Sodalis glossinidius (strain morsitans).